A 358-amino-acid polypeptide reads, in one-letter code: UDP-N-acetylglucosamine--N-acetylmuramyl-(pentapeptide) pyrophosphoryl-undecaprenol N-acetylglucosamine transferase (358 aa).

Residues 11–13 (TGG), Asn-120, Arg-161, Ser-188, and Gln-282 contribute to the UDP-N-acetyl-alpha-D-glucosamine site.

The protein belongs to the glycosyltransferase 28 family. MurG subfamily.

It localises to the cell inner membrane. The catalysed reaction is di-trans,octa-cis-undecaprenyl diphospho-N-acetyl-alpha-D-muramoyl-L-alanyl-D-glutamyl-meso-2,6-diaminopimeloyl-D-alanyl-D-alanine + UDP-N-acetyl-alpha-D-glucosamine = di-trans,octa-cis-undecaprenyl diphospho-[N-acetyl-alpha-D-glucosaminyl-(1-&gt;4)]-N-acetyl-alpha-D-muramoyl-L-alanyl-D-glutamyl-meso-2,6-diaminopimeloyl-D-alanyl-D-alanine + UDP + H(+). It functions in the pathway cell wall biogenesis; peptidoglycan biosynthesis. Functionally, cell wall formation. Catalyzes the transfer of a GlcNAc subunit on undecaprenyl-pyrophosphoryl-MurNAc-pentapeptide (lipid intermediate I) to form undecaprenyl-pyrophosphoryl-MurNAc-(pentapeptide)GlcNAc (lipid intermediate II). In Synechococcus sp. (strain WH7803), this protein is UDP-N-acetylglucosamine--N-acetylmuramyl-(pentapeptide) pyrophosphoryl-undecaprenol N-acetylglucosamine transferase.